Here is a 194-residue protein sequence, read N- to C-terminus: MDQEKVLKEFEKAGALLRGHFILSSGLHSPVFLQKALVFMNPQRTGRLCKALAEKIRQEVKGPIDAIVSPAVGGIIPGYETARYMKVPAMYVEREQGEFVLRRGFPLTKGMRVVMVEDIVTTGLSSRECIEAIGKTGAKVVAAACLIDRSGGKAKVGTKLISLARIAIPAYAPDKLPKELAALPAEKPGSRHIA.

117–125 is a binding site for 5-phospho-alpha-D-ribose 1-diphosphate; that stretch reads EDIVTTGLS. The orotate site is built by Thr-121 and Arg-149.

Belongs to the purine/pyrimidine phosphoribosyltransferase family. PyrE subfamily. In terms of assembly, homodimer. The cofactor is Mg(2+).

It catalyses the reaction orotidine 5'-phosphate + diphosphate = orotate + 5-phospho-alpha-D-ribose 1-diphosphate. Its pathway is pyrimidine metabolism; UMP biosynthesis via de novo pathway; UMP from orotate: step 1/2. Its function is as follows. Catalyzes the transfer of a ribosyl phosphate group from 5-phosphoribose 1-diphosphate to orotate, leading to the formation of orotidine monophosphate (OMP). The polypeptide is Orotate phosphoribosyltransferase (Parvibaculum lavamentivorans (strain DS-1 / DSM 13023 / NCIMB 13966)).